Here is a 246-residue protein sequence, read N- to C-terminus: MKLLSKLILTLALATYASASESFRYINWDNPPHDVTFYEGDVLQFTTNEGRNSTITLISDTENGDKSFDGVLNEDQRSFVQKALPPGRYTFKDLNSGSKSIIRVKESKELAKEVRPIDRLKDNADAANTENAQKSPNTQSTQKGSPKSDAKEASPKTDAKEASPKSDAKEASPKTDTKQGSSPKTDTKSSTQKPSSSSDSSKAKAEANTAANNEEAEHVEKGASNTLKASLSIISAACVLSLGYLL.

The signal sequence occupies residues 1–19 (MKLLSKLILTLALATYASA). Residue N52 is glycosylated (N-linked (GlcNAc...) asparagine). Positions 113–124 (EVRPIDRLKDNA) are enriched in basic and acidic residues. Residues 113-223 (EVRPIDRLKD…EEAEHVEKGA (111 aa)) form a disordered region. A compositionally biased stretch (polar residues) spans 126-145 (AANTENAQKSPNTQSTQKGS). A run of 3 repeats spans residues 145-153 (SPKSDAKEA), 154-162 (SPKTDAKEA), and 163-171 (SPKSDAKEA). Residues 145–176 (SPKSDAKEASPKTDAKEASPKSDAKEASPKTD) form a 3.5 X 9 AA tandem repeats of S-P-K-[ST]-D-A-K-E-A region. Residues 146–177 (PKSDAKEASPKTDAKEASPKSDAKEASPKTDT) are compositionally biased toward basic and acidic residues. A 4; truncated repeat occupies 172–176 (SPKTD). The segment covering 181–213 (SSPKTDTKSSTQKPSSSSDSSKAKAEANTAANN) has biased composition (low complexity).

The protein is Protein 3F (pspG) of Dictyostelium discoideum (Social amoeba).